The sequence spans 299 residues: Nucleotide-binding protein glr4163 (299 aa).

An ATP-binding site is contributed by 18-25 (SPAGAGRT).

Belongs to the RapZ-like family.

Functionally, displays ATPase and GTPase activities. The chain is Nucleotide-binding protein glr4163 from Gloeobacter violaceus (strain ATCC 29082 / PCC 7421).